The following is a 421-amino-acid chain: 4-hydroxy-3-methylbut-2-en-1-yl diphosphate synthase (flavodoxin) (421 aa).

Residues Cys298, Cys301, Cys344, and Glu351 each contribute to the [4Fe-4S] cluster site.

The protein belongs to the IspG family. It depends on [4Fe-4S] cluster as a cofactor.

It carries out the reaction (2E)-4-hydroxy-3-methylbut-2-enyl diphosphate + oxidized [flavodoxin] + H2O + 2 H(+) = 2-C-methyl-D-erythritol 2,4-cyclic diphosphate + reduced [flavodoxin]. It functions in the pathway isoprenoid biosynthesis; isopentenyl diphosphate biosynthesis via DXP pathway; isopentenyl diphosphate from 1-deoxy-D-xylulose 5-phosphate: step 5/6. Its function is as follows. Converts 2C-methyl-D-erythritol 2,4-cyclodiphosphate (ME-2,4cPP) into 1-hydroxy-2-methyl-2-(E)-butenyl 4-diphosphate. In Neisseria meningitidis serogroup C (strain 053442), this protein is 4-hydroxy-3-methylbut-2-en-1-yl diphosphate synthase (flavodoxin).